Reading from the N-terminus, the 398-residue chain is Ureide permease 2 (398 aa).

The Extracellular portion of the chain corresponds to 1–10 (MYLVESKGGA). The helical transmembrane segment at 11-31 (IACMLLALLSLGTWPAVLTLL) threads the bilayer. Residues 32–44 (ERRGRLPQHTYLD) lie on the Cytoplasmic side of the membrane. A helical membrane pass occupies residues 45–65 (YSITNLLAAIIIAFTFGQIGS). Topologically, residues 66–81 (TKPDSPNFITQLAQDN) are extracellular. The chain crosses the membrane as a helical span at residues 82–102 (WPSVMFAMAGGIVLSLGNLST). The Cytoplasmic portion of the chain corresponds to 103 to 104 (QY). A helical membrane pass occupies residues 105 to 125 (AWALVGLSVTEVITSSITVVI). The Extracellular portion of the chain corresponds to 126-139 (GSTLNYFLDDKINK). A helical transmembrane segment spans residues 140 to 160 (AEILFPGVACFLIAVCLGSAV). Residues 161 to 229 (HRSNADDNKA…RAIKVFGKRK (69 aa)) lie on the Cytoplasmic side of the membrane. Residues 176–200 (ETAKQEASGPSTEIGTNSSKDLETN) form a disordered region. The segment covering 183 to 200 (SGPSTEIGTNSSKDLETN) has biased composition (polar residues). 221–228 (AIKVFGKR) provides a ligand contact to ATP. A helical membrane pass occupies residues 230–250 (IIGLAITFFAGLCFSLFSPAF). Residues 251–272 (NLATNDQWNRLKQGVPKLVVYT) lie on the Extracellular side of the membrane. A helical transmembrane segment spans residues 273-293 (AFFYFSVSCFIIALILNVVFL). Topologically, residues 294-315 (YYPVLGLPKSSFKAYLNDWNGR) are cytoplasmic. The chain crosses the membrane as a helical span at residues 316-336 (YWAFLAGFLCGFGNGLQFMGG). Topologically, residues 337–341 (QAAGY) are extracellular. A helical transmembrane segment spans residues 342–362 (AAADSVQALPLVSTFWGVVLF). Over 363 to 371 (GEYRRSSRK) the chain is Cytoplasmic. Residues 372-392 (TYLLLFCMLFMFISAVAVLMA) traverse the membrane as a helical segment. At 393-398 (SSGHRK) the chain is on the extracellular side.

It belongs to the plant ureide permease (TC 2.A.7.19) family. In terms of tissue distribution, expressed in root xylem, cotyledons and leaves. Expressed in leaf blades, petioles, trichomes, stems, flower stigma, the upper part of pedicels, sepals, and the top and bottom parts of carpels in siliques.

The protein localises to the membrane. Functionally, proton-coupled transporter that transports a wide spectrum of oxo derivatives of heterocyclic nitrogen compounds, including allantoin, uric acid and xanthine, but not adenine. Mediates high affinity transport of uracil and 5-fluorouracil (a toxic uracil analog). Mediates transport of free pyrimidines and may function during early seedling development in salvage pathways, by the utilization of pyrimidines from seed storage tissue. The sequence is that of Ureide permease 2 from Arabidopsis thaliana (Mouse-ear cress).